We begin with the raw amino-acid sequence, 105 residues long: Large ribosomal subunit protein bL21 (105 aa).

It belongs to the bacterial ribosomal protein bL21 family. Part of the 50S ribosomal subunit. Contacts protein L20.

Its function is as follows. This protein binds to 23S rRNA in the presence of protein L20. This Methylobacterium sp. (strain 4-46) protein is Large ribosomal subunit protein bL21.